A 580-amino-acid polypeptide reads, in one-letter code: Probable alpha-1,3-mannosyltransferase MNT4 (580 aa).

Over 1–10 the chain is Cytoplasmic; that stretch reads MVLRIRRIKK. A helical; Signal-anchor for type II membrane protein membrane pass occupies residues 11–29; sequence LAPLIFTSLLSLIVLFRVY. The Lumenal segment spans residues 30–580; that stretch reads RQYPFSDHFE…KVVELWNKVV (551 aa). Asn132, Asn167, Asn223, and Asn349 each carry an N-linked (GlcNAc...) asparagine glycan.

It belongs to the MNN1/MNT family.

It is found in the membrane. This Saccharomyces cerevisiae (strain ATCC 204508 / S288c) (Baker's yeast) protein is Probable alpha-1,3-mannosyltransferase MNT4 (MNT4).